We begin with the raw amino-acid sequence, 137 residues long: 6,7-dimethyl-8-ribityllumazine synthase (137 aa).

5-amino-6-(D-ribitylamino)uracil contacts are provided by residues Phe11, 43–45 (SFD), and 67–69 (CVI). 72 to 73 (DT) is a binding site for (2S)-2-hydroxy-3-oxobutyl phosphate. His75 functions as the Proton donor in the catalytic mechanism. Leu100 serves as a coordination point for 5-amino-6-(D-ribitylamino)uracil. Position 115 (Arg115) interacts with (2S)-2-hydroxy-3-oxobutyl phosphate.

The protein belongs to the DMRL synthase family. In terms of assembly, forms an icosahedral capsid composed of 60 subunits, arranged as a dodecamer of pentamers.

The enzyme catalyses (2S)-2-hydroxy-3-oxobutyl phosphate + 5-amino-6-(D-ribitylamino)uracil = 6,7-dimethyl-8-(1-D-ribityl)lumazine + phosphate + 2 H2O + H(+). It participates in cofactor biosynthesis; riboflavin biosynthesis; riboflavin from 2-hydroxy-3-oxobutyl phosphate and 5-amino-6-(D-ribitylamino)uracil: step 1/2. Functionally, catalyzes the formation of 6,7-dimethyl-8-ribityllumazine by condensation of 5-amino-6-(D-ribitylamino)uracil with 3,4-dihydroxy-2-butanone 4-phosphate. This is the penultimate step in the biosynthesis of riboflavin. This chain is 6,7-dimethyl-8-ribityllumazine synthase, found in Methanococcus maripaludis (strain DSM 14266 / JCM 13030 / NBRC 101832 / S2 / LL).